The chain runs to 290 residues: UPF0750 membrane protein YdeO (290 aa).

A run of 5 helical transmembrane segments spans residues 18–38 (IIMV…VLIP), 56–76 (LFNL…VWLG), 83–103 (SFAL…SFFH), 112–132 (DTLL…GLAL), and 165–185 (LFVF…LSVI).

Belongs to the UPF0750 family.

The protein localises to the cell membrane. This is UPF0750 membrane protein YdeO (ydeO) from Bacillus subtilis (strain 168).